Here is a 249-residue protein sequence, read N- to C-terminus: Type I iodothyronine deiodinase (249 aa).

The Extracellular segment spans residues 1–12 (MGLPRPGLWLKR). A helical; Signal-anchor for type III membrane protein transmembrane segment spans residues 13-33 (LWVLVQVAVEVAVGKVLMTLF). Residues 34–249 (PERVKQNILA…VRAVLEELHS (216 aa)) lie on the Cytoplasmic side of the membrane. Residue selenocysteine 126 is part of the active site. A non-standard amino acid (selenocysteine) is located at residue selenocysteine 126.

The protein belongs to the iodothyronine deiodinase family. Predominantly monomer. Can form homodimers but homodimerization is not essential for enzyme activity.

It is found in the cell membrane. The protein resides in the endoplasmic reticulum membrane. Its subcellular location is the basolateral cell membrane. The enzyme catalyses 3,3',5-triiodo-L-thyronine + iodide + A + H(+) = L-thyroxine + AH2. It carries out the reaction 3,3',5'-triiodo-L-thyronine + iodide + A + H(+) = L-thyroxine + AH2. The catalysed reaction is 3,3'-diiodo-L-thyronine + iodide + A + H(+) = 3,3',5'-triiodo-L-thyronine + AH2. It catalyses the reaction 3,3'-diiodo-L-thyronine + iodide + A + H(+) = 3,3',5-triiodo-L-thyronine + AH2. The enzyme catalyses 3'-iodo-L-thyronine + iodide + A + H(+) = 3',5'-diiodo-L-thyronine + AH2. It carries out the reaction 3-iodo-L-thyronine + iodide + A + H(+) = 3,5-diiodo-L-thyronine + AH2. The catalysed reaction is 3-iodo-L-thyronine + iodide + A + H(+) = 3,3'-diiodo-L-thyronine + AH2. It catalyses the reaction 3,3'-diiodothyronamine + iodide + A + H(+) = 3,3',5'-triiodothyronamine + AH2. The enzyme catalyses 3'-iodothyronamine + iodide + A + H(+) = 3',5'-diiodothyronamine + AH2. It carries out the reaction 3-iodothyronamine + iodide + A + H(+) = 3,3'-diiodothyronamine + AH2. The catalysed reaction is 3,3'-diiodothyronamine + iodide + A + H(+) = 3,3',5-triiodothyronamine + AH2. It catalyses the reaction 3-iodothyronamine + iodide + A + H(+) = 3,5-diiodothyronamine + AH2. The enzyme catalyses 3,3'-diiodo-L-thyronine sulfate + iodide + A + H(+) = 3,3',5'-triiodo-L-thyronine sulfate + AH2. It carries out the reaction 3,3',5'-triiodo-L-thyronine sulfate + iodide + A + H(+) = L-thyroxine sulfate + AH2. The catalysed reaction is 3,3'-diiodo-L-thyronine sulfate + iodide + A + H(+) = 3,3',5-triiodo-L-thyronine sulfate + AH2. In terms of biological role, plays a crucial role in the metabolism of thyroid hormones (TH) and has specific roles in TH activation and inactivation by deiodination. Catalyzes the deiodination of L-thyroxine (T4) to 3,5,3'-triiodothyronine (T3) via outer-ring deiodination (ORD) and of T4 to 3,3',5'-triiodothyronine (rT3) via inner-ring deiodination (IRD). Catalyzes the deiodiantion of rT3 to 3,3'-diiodothyronine (3,3'-T2) and 3',5'-diiodothyronine (3',5'-T2) to 3'-monoiodothyronine (3'-T1) via ORD. Catalyzes the deiodination of T3 to 3,3'-T2, 3,5-diiodothyronine (3,5-T2) to 3-monoiodothyronine (3-T1) and 3,3'-T2 to 3-T1 via IRD. Catalyzes the phenolic ring deiodinations of 3,3',5'-triiodothyronamine, 3',5'-diiodothyronamine and 3,3'-diiodothyronamine as well as tyrosyl ring deiodinations of 3,5,3'-triiodothyronamine and 3,5-diiodothyronamine. Catalyzes the deiodination of L-thyroxine sulfate and 3,3',5-triiodo-L-thyronine sulfate via IRD and of 3,3',5'-triiodo-L-thyronine sulfate via ORD. The polypeptide is Type I iodothyronine deiodinase (DIO1) (Oryctolagus cuniculus (Rabbit)).